Consider the following 449-residue polypeptide: 23S rRNA (uracil(1939)-C(5))-methyltransferase RlmD (449 aa).

Residues 12–70 (SKQLSAKQSFSVHQLDHLGAGIAQHQGKVVFIPGALPSETVQAQLTEQKKNYARAKLIK) enclose the TRAM domain. [4Fe-4S] cluster is bound by residues C83, C89, C92, and C170. The S-adenosyl-L-methionine site is built by Q282, F311, N316, E332, D359, and D379. C405 acts as the Nucleophile in catalysis.

The protein belongs to the class I-like SAM-binding methyltransferase superfamily. RNA M5U methyltransferase family. RlmD subfamily.

It carries out the reaction uridine(1939) in 23S rRNA + S-adenosyl-L-methionine = 5-methyluridine(1939) in 23S rRNA + S-adenosyl-L-homocysteine + H(+). In terms of biological role, catalyzes the formation of 5-methyl-uridine at position 1939 (m5U1939) in 23S rRNA. The chain is 23S rRNA (uracil(1939)-C(5))-methyltransferase RlmD from Shewanella sp. (strain MR-4).